The primary structure comprises 59 residues: Conotoxin Bu1.2 (59 aa).

An N-terminal signal peptide occupies residues 1–16 (MFTVFLLVVLATTVVS). The propeptide occupies 17-42 (FSTDDESDGSNEEPSADQAARSAMNR). A disordered region spans residues 18–43 (STDDESDGSNEEPSADQAARSAMNRP). The span at 19–31 (TDDESDGSNEEPS) shows a compositional bias: acidic residues. Disulfide bonds link Cys-46–Cys-52 and Cys-47–Cys-57. At Gly-58 the chain carries Glycine amide.

The protein belongs to the conotoxin A superfamily. As to expression, expressed by the venom duct.

Its subcellular location is the secreted. This Conus bullatus (Bubble cone) protein is Conotoxin Bu1.2.